The primary structure comprises 54 residues: Relaxin (54 aa).

Position 1 is a pyrrolidone carboxylic acid (Gln-1). Cystine bridges form between Cys-10–Cys-41, Cys-22–Cys-54, and Cys-40–Cys-45.

This sequence belongs to the insulin family. As to quaternary structure, heterodimer of a B chain and an A chain linked by two disulfide bonds.

The protein localises to the secreted. Functionally, relaxin is an ovarian hormone that acts with estrogen to produce dilatation of the birth canal in many mammals. This Balaenoptera edeni (Pigmy Bryde's whale) protein is Relaxin.